Consider the following 414-residue polypeptide: Phosphoglycerate kinase (414 aa).

Residues aspartate 20–asparagine 22, arginine 37, histidine 60–arginine 63, arginine 117, and arginine 164 contribute to the substrate site. ATP contacts are provided by residues glutamate 338 and glycine 364–leucine 367.

This sequence belongs to the phosphoglycerate kinase family. In terms of assembly, monomer.

It localises to the cytoplasm. It carries out the reaction (2R)-3-phosphoglycerate + ATP = (2R)-3-phospho-glyceroyl phosphate + ADP. It functions in the pathway carbohydrate degradation; glycolysis; pyruvate from D-glyceraldehyde 3-phosphate: step 2/5. The polypeptide is Phosphoglycerate kinase (Methanococcus maripaludis (strain DSM 14266 / JCM 13030 / NBRC 101832 / S2 / LL)).